A 182-amino-acid chain; its full sequence is Nascent polypeptide-associated complex subunit alpha (182 aa).

The NAC-A/B domain occupies 17-81 (NKNEKKAKEL…AKVDDMNQRI (65 aa)). Residues 120–148 (ASLQGGESNADAAEDDNEEVDETGINPKD) are disordered. Over residues 131-141 (AAEDDNEEVDE) the composition is skewed to acidic residues. The UBA domain maps to 144-182 (INPKDIDLIVEQTRVSRGSAVKALKKHDGDMVNALMELS).

It belongs to the NAC-alpha family. In terms of assembly, part of the nascent polypeptide-associated complex (NAC), consisting of EGD2 and EGD1. NAC associates with ribosomes via EGD1.

It localises to the cytoplasm. It is found in the nucleus. Its function is as follows. Component of the nascent polypeptide-associated complex (NAC), a dynamic component of the ribosomal exit tunnel, protecting the emerging polypeptides from interaction with other cytoplasmic proteins to ensure appropriate nascent protein targeting. The NAC complex also promotes mitochondrial protein import by enhancing productive ribosome interactions with the outer mitochondrial membrane and blocks the inappropriate interaction of ribosomes translating non-secretory nascent polypeptides with translocation sites in the membrane of the endoplasmic reticulum. EGD2 may also be involved in transcription regulation. The polypeptide is Nascent polypeptide-associated complex subunit alpha (EGD2) (Lodderomyces elongisporus (strain ATCC 11503 / CBS 2605 / JCM 1781 / NBRC 1676 / NRRL YB-4239) (Yeast)).